A 392-amino-acid polypeptide reads, in one-letter code: UDP-N-acetylglucosamine--N-acetylmuramyl-(pentapeptide) pyrophosphoryl-undecaprenol N-acetylglucosamine transferase (392 aa).

Residues threonine 14–glycine 16, asparagine 124, arginine 167, serine 195, isoleucine 251, and glutamine 296 each bind UDP-N-acetyl-alpha-D-glucosamine.

The protein belongs to the glycosyltransferase 28 family. MurG subfamily.

It localises to the cell inner membrane. The catalysed reaction is di-trans,octa-cis-undecaprenyl diphospho-N-acetyl-alpha-D-muramoyl-L-alanyl-D-glutamyl-meso-2,6-diaminopimeloyl-D-alanyl-D-alanine + UDP-N-acetyl-alpha-D-glucosamine = di-trans,octa-cis-undecaprenyl diphospho-[N-acetyl-alpha-D-glucosaminyl-(1-&gt;4)]-N-acetyl-alpha-D-muramoyl-L-alanyl-D-glutamyl-meso-2,6-diaminopimeloyl-D-alanyl-D-alanine + UDP + H(+). Its pathway is cell wall biogenesis; peptidoglycan biosynthesis. In terms of biological role, cell wall formation. Catalyzes the transfer of a GlcNAc subunit on undecaprenyl-pyrophosphoryl-MurNAc-pentapeptide (lipid intermediate I) to form undecaprenyl-pyrophosphoryl-MurNAc-(pentapeptide)GlcNAc (lipid intermediate II). The protein is UDP-N-acetylglucosamine--N-acetylmuramyl-(pentapeptide) pyrophosphoryl-undecaprenol N-acetylglucosamine transferase of Sphingopyxis alaskensis (strain DSM 13593 / LMG 18877 / RB2256) (Sphingomonas alaskensis).